Reading from the N-terminus, the 245-residue chain is D-aminoacyl-tRNA deacylase (245 aa).

The protein belongs to the DtdA deacylase family. Monomer. Zn(2+) serves as cofactor.

It catalyses the reaction a D-aminoacyl-tRNA + H2O = a tRNA + a D-alpha-amino acid + H(+). The enzyme catalyses glycyl-tRNA(Ala) + H2O = tRNA(Ala) + glycine + H(+). In terms of biological role, D-aminoacyl-tRNA deacylase with broad substrate specificity. By recycling D-aminoacyl-tRNA to D-amino acids and free tRNA molecules, this enzyme counteracts the toxicity associated with the formation of D-aminoacyl-tRNA entities in vivo. The polypeptide is D-aminoacyl-tRNA deacylase (Ignicoccus hospitalis (strain KIN4/I / DSM 18386 / JCM 14125)).